Consider the following 430-residue polypeptide: 3-phosphoshikimate 1-carboxyvinyltransferase (430 aa).

Residues Lys33, Ser34, and Arg38 each coordinate 3-phosphoshikimate. Position 33 (Lys33) interacts with phosphoenolpyruvate. Phosphoenolpyruvate contacts are provided by Gly101 and Arg129. 6 residues coordinate 3-phosphoshikimate: Ser172, Ser173, Gln174, Ser201, Glu319, and His346. Gln174 lines the phosphoenolpyruvate pocket. Glu319 functions as the Proton acceptor in the catalytic mechanism. Phosphoenolpyruvate-binding residues include Arg350, Arg391, and Lys416.

Belongs to the EPSP synthase family. In terms of assembly, monomer.

It is found in the cytoplasm. It catalyses the reaction 3-phosphoshikimate + phosphoenolpyruvate = 5-O-(1-carboxyvinyl)-3-phosphoshikimate + phosphate. It functions in the pathway metabolic intermediate biosynthesis; chorismate biosynthesis; chorismate from D-erythrose 4-phosphate and phosphoenolpyruvate: step 6/7. Catalyzes the transfer of the enolpyruvyl moiety of phosphoenolpyruvate (PEP) to the 5-hydroxyl of shikimate-3-phosphate (S3P) to produce enolpyruvyl shikimate-3-phosphate and inorganic phosphate. This chain is 3-phosphoshikimate 1-carboxyvinyltransferase, found in Corynebacterium glutamicum (strain R).